A 473-amino-acid chain; its full sequence is Photosystem II CP43 reaction center protein (473 aa).

The propeptide occupies 1-14 (MKTLYSLRRFYHVE). An N-acetylthreonine modification is found at T15. A Phosphothreonine modification is found at T15. A run of 5 helical transmembrane segments spans residues 69–93 (LFEV…PHLA), 134–155 (LLGP…KDRN), 178–200 (KALY…RKIT), 255–275 (KPFA…LSYS), and 291–312 (WFNN…ASQA). Residue E367 participates in [CaMn4O5] cluster binding. A helical membrane pass occupies residues 447–471 (RARAAAAGFEKGIDRDFEPVLSMTP).

Belongs to the PsbB/PsbC family. PsbC subfamily. In terms of assembly, PSII is composed of 1 copy each of membrane proteins PsbA, PsbB, PsbC, PsbD, PsbE, PsbF, PsbH, PsbI, PsbJ, PsbK, PsbL, PsbM, PsbT, PsbX, PsbY, PsbZ, Psb30/Ycf12, at least 3 peripheral proteins of the oxygen-evolving complex and a large number of cofactors. It forms dimeric complexes. The cofactor is Binds multiple chlorophylls and provides some of the ligands for the Ca-4Mn-5O cluster of the oxygen-evolving complex. It may also provide a ligand for a Cl- that is required for oxygen evolution. PSII binds additional chlorophylls, carotenoids and specific lipids..

It is found in the plastid. Its subcellular location is the chloroplast thylakoid membrane. Its function is as follows. One of the components of the core complex of photosystem II (PSII). It binds chlorophyll and helps catalyze the primary light-induced photochemical processes of PSII. PSII is a light-driven water:plastoquinone oxidoreductase, using light energy to abstract electrons from H(2)O, generating O(2) and a proton gradient subsequently used for ATP formation. This Crucihimalaya wallichii (Rock-cress) protein is Photosystem II CP43 reaction center protein.